A 72-amino-acid chain; its full sequence is uncharacterized protein (72 aa).

Over residues 1 to 38 (MSIFSSLSSLSTGSLKSSVSSIENGSSSGSFGSNETSG) the composition is skewed to low complexity. The segment at 1 to 42 (MSIFSSLSSLSTGSLKSSVSSIENGSSSGSFGSNETSGWGQH) is disordered.

This is an uncharacterized protein from Dictyostelium discoideum (Social amoeba).